Here is a 145-residue protein sequence, read N- to C-terminus: Protein SprT-like (145 aa).

The SprT-like domain maps to 4-140 (TNYVQEVSLA…VCGNCHGKLI (137 aa)). His64 contributes to the Zn(2+) binding site. Residue Glu65 is part of the active site. His68 contacts Zn(2+).

This sequence belongs to the SprT family. Zn(2+) is required as a cofactor.

The protein localises to the cytoplasm. In Streptococcus pyogenes serotype M6 (strain ATCC BAA-946 / MGAS10394), this protein is Protein SprT-like.